Reading from the N-terminus, the 817-residue chain is MMKTEPRGPGGPLRSASPHRSAYEAGIQALKPPDAPGPDEAPKGAHHKKYGSNVHRIKSMFLQMGTTAGPSGEAGGGAGLAEAPRASERGVRLSLPRASSLNENVDHSALLKLGTSVSERVSRFDSKPAPSAQPAPPPHPPSRLQETRKLFERSAPAAAGGDKEAAARRLLRQERAGLQDRKLDVVVRFNGSTEALDKLDADAVSPTVSQLSAVFEKADSRTGLHRGPGLPRAAGVPQVNSKLVSKRSRVFQPPPPPPPAPSGDAPAEKERCPAGQQPPQHRVAPARPPPKPREVRKIKPVEVEESGESEAESAPGEVIQAEVTVHAALENGSTVATAASPAPEEPKAQAAPEKEAAAVAPPERGVGNGRAPDVAPEEVDESKKEDFSEADLVDVSAYSGLGEDSAGSALEEDDEDDEEDGEPPYEPESGCVEIPGLSEEEDPAPSRKIHFSTAPIQVFSTYSNEDYDRRNEDVDPMAASAEYELEKRVERLELFPVELEKDSEGLGISIIGMGAGADMGLEKLGIFVKTVTEGGAAHRDGRIQVNDLLVEVDGTSLVGVTQSFAASVLRNTKGRVRFMIGRERPGEQSEVAQLIQQTLEQERWQREMMEQRYAQYGEDDEETGEYATDEDEELSPTFPGGEMAIEVFELAENEDALSPVDMEPEKLVHKFKELQIKHAVTEAEIQQLKRKLQSLEQEKGRWRVEKAQLEQSVEENKERMEKLEGYWGEAQSLCQAVDEHLRETQAQYQALERKYSKAKRLIKDYQQKEIEFLKKETAQRRVLEESELARKEEMDKLLDKISELEGNLQTLRNSNST.

2 actin-binding regions span residues 1–154 (MMKT…FERS) and 164–283 (EAAA…QHRV). Positions 1–165 (MMKTEPRGPG…PAAAGGDKEA (165 aa)) are disordered. A phosphoserine mark is found at Ser-15 and Ser-17. Basic residues predominate over residues 44-58 (GAHHKKYGSNVHRIK). 3 positions are modified to phosphoserine: Ser-94, Ser-100, and Ser-116. Residues 100–371 (SLNENVDHSA…PERGVGNGRA (272 aa)) form an interaction with D(2) dopamine receptor region. Positions 131 to 141 (SAQPAPPPHPP) are enriched in pro residues. The tract at residues 169–255 (RLLRQERAGL…KRSRVFQPPP (87 aa)) is interaction with ADRA2A, ADRA2B and ADRA2C. Phosphoserine is present on Ser-192. Residue Thr-193 is modified to Phosphothreonine. Ser-205 is subject to Phosphoserine. At Thr-207 the chain carries Phosphothreonine. A disordered region spans residues 216–447 (EKADSRTGLH…SEEEDPAPSR (232 aa)). Positions 252-261 (QPPPPPPPAP) are enriched in pro residues. Residues 291–302 (KPREVRKIKPVE) show a composition bias toward basic and acidic residues. Low complexity predominate over residues 333 to 342 (STVATAASPA). The segment covering 344–356 (EEPKAQAAPEKEA) has biased composition (basic and acidic residues). A compositionally biased stretch (acidic residues) spans 410 to 425 (LEEDDEDDEEDGEPPY). Residues 417–494 (DEEDGEPPYE…LEKRVERLEL (78 aa)) are interaction with protein phosphatase 1. Position 438 is a phosphoserine (Ser-438). The PP1-binding motif signature appears at 447–451 (RKIHF). The interaction with RGS2 stretch occupies residues 480–525 (SAEYELEKRVERLELFPVELEKDSEGLGISIIGMGAGADMGLEKLG). One can recognise a PDZ domain in the interval 496 to 584 (PVELEKDSEG…RVRFMIGRER (89 aa)). Positions 595–816 (IQQTLEQERW…NLQTLRNSNS (222 aa)) are interaction with TGN38. The residue at position 658 (Ser-658) is a Phosphoserine. Residues 671-788 (FKELQIKHAV…QRRVLEESEL (118 aa)) adopt a coiled-coil conformation.

As to quaternary structure, interacts with DCLK2. Possibly exists as a homodimer, homotrimer or a homotetramer. Interacts with F-actin, PPP1CA, neurabin-1, TGN38 and D(2) dopamine receptor. Interacts with RGS1, RGS2, RGS4, RGS19 and ADRA1B, ADRA2A, ADRA2B, ADRA2C, CDKN2A, PPP1R2, RASGFR1 and TIAM1. Interacts (via C-terminus) with SPATA13 (via C-terminal tail). Interacts with ADRA2B. In terms of processing, stimulation of D1 (but not D2) dopamine receptors induces Ser-94 phosphorylation. Dephosphorylation of Ser-94 is mediated mainly by PP1 and to a lesser extent by PP2A. Phosphorylation of spinophilin disrupts its association with F-actin, but does not affect its binding to PP1.

Its subcellular location is the cytoplasm. The protein resides in the cytoskeleton. The protein localises to the nucleus. It localises to the cell projection. It is found in the dendritic spine. Its subcellular location is the postsynaptic density. The protein resides in the synapse. The protein localises to the cell junction. It localises to the adherens junction. It is found in the cell membrane. Its subcellular location is the lamellipodium. The protein resides in the filopodium. The protein localises to the ruffle membrane. Its function is as follows. Seems to act as a scaffold protein in multiple signaling pathways. Modulates excitatory synaptic transmission and dendritic spine morphology. Binds to actin filaments (F-actin) and shows cross-linking activity. Binds along the sides of the F-actin. May play an important role in linking the actin cytoskeleton to the plasma membrane at the synaptic junction. Believed to target protein phosphatase 1/PP1 to dendritic spines, which are rich in F-actin, and regulates its specificity toward ion channels and other substrates, such as AMPA-type and NMDA-type glutamate receptors. Plays a role in regulation of G-protein coupled receptor signaling, including dopamine D2 receptors and alpha-adrenergic receptors. May establish a signaling complex for dopaminergic neurotransmission through D2 receptors by linking receptors downstream signaling molecules and the actin cytoskeleton. Binds to ADRA1B and RGS2 and mediates regulation of ADRA1B signaling. May confer to Rac signaling specificity by binding to both, RacGEFs and Rac effector proteins. Probably regulates p70 S6 kinase activity by forming a complex with TIAM1. Required for hepatocyte growth factor (HGF)-induced cell migration. This Homo sapiens (Human) protein is Neurabin-2 (PPP1R9B).